A 102-amino-acid chain; its full sequence is Small ubiquitin-related modifier 1-A (102 aa).

Positions 1–20 (MSDQEAKPSSEDLGDKKDGG) are disordered. The Ubiquitin-like domain occupies 21-98 (DYIKLKVIGQ…IEVYQEQTGG (78 aa)). A Glycyl lysine isopeptide (Gly-Lys) (interchain with K-? in acceptor proteins) cross-link involves residue glycine 98. A propeptide spanning residues 99–102 (HSTF) is cleaved from the precursor.

The protein belongs to the ubiquitin family. SUMO subfamily. As to quaternary structure, interacts with sae2, ube2i, ranbp2, pias1 and pias2. Covalently attached to a number of proteins including rangap1 and ranbp2. Interacts with sox9 and sox10. In terms of processing, cleavage of precursor form by a sentrin-specific protease is necessary for function.

The protein resides in the nucleus membrane. It localises to the nucleus speckle. It is found in the cytoplasm. Its subcellular location is the nucleus. The protein localises to the PML body. The protein resides in the cell membrane. Its function is as follows. Ubiquitin-like protein that can be covalently attached to proteins as a monomer or a lysine-linked polymer. Covalent attachment via an isopeptide bond to its substrates requires prior activation by the E1 complex sae1-sae2 and linkage to the E2 enzyme ube2i. This post-translational modification on lysine residues of proteins plays a crucial role in a number of cellular processes such as nuclear transport, DNA replication and repair, mitosis and signal transduction. Polymeric sumo1 chains are also susceptible to polyubiquitination which functions as a signal for proteasomal degradation of modified proteins. The protein is Small ubiquitin-related modifier 1-A (sumo1-a) of Xenopus laevis (African clawed frog).